A 178-amino-acid chain; its full sequence is ATP synthase subunit delta (178 aa).

The protein belongs to the ATPase delta chain family. F-type ATPases have 2 components, F(1) - the catalytic core - and F(0) - the membrane proton channel. F(1) has five subunits: alpha(3), beta(3), gamma(1), delta(1), epsilon(1). F(0) has three main subunits: a(1), b(2) and c(10-14). The alpha and beta chains form an alternating ring which encloses part of the gamma chain. F(1) is attached to F(0) by a central stalk formed by the gamma and epsilon chains, while a peripheral stalk is formed by the delta and b chains.

Its subcellular location is the cell inner membrane. Functionally, f(1)F(0) ATP synthase produces ATP from ADP in the presence of a proton or sodium gradient. F-type ATPases consist of two structural domains, F(1) containing the extramembraneous catalytic core and F(0) containing the membrane proton channel, linked together by a central stalk and a peripheral stalk. During catalysis, ATP synthesis in the catalytic domain of F(1) is coupled via a rotary mechanism of the central stalk subunits to proton translocation. This protein is part of the stalk that links CF(0) to CF(1). It either transmits conformational changes from CF(0) to CF(1) or is implicated in proton conduction. The sequence is that of ATP synthase subunit delta from Chromobacterium violaceum (strain ATCC 12472 / DSM 30191 / JCM 1249 / CCUG 213 / NBRC 12614 / NCIMB 9131 / NCTC 9757 / MK).